Consider the following 1049-residue polypeptide: Dyslexia-associated protein KIAA0319-like protein (1049 aa).

The Cytoplasmic portion of the chain corresponds to Met1–Arg29. The helical transmembrane segment at Thr30–Ser50 threads the bilayer. In terms of domain architecture, MANSC spans Ala49–Met127. Topologically, residues Glu51–Tyr932 are extracellular. A disordered region spans residues Thr234 to Val277. N-linked (GlcNAc...) asparagine glycans are attached at residues Asn247, Asn395, and Asn487. PKD domains lie at Val310–Glu401, Ile409–Ala498, Val504–Glu594, Gln600–Glu688, and Ile694–Asp785. A helical transmembrane segment spans residues Val933–Cys953. Residues Cys954–Leu1049 lie on the Cytoplasmic side of the membrane. Thr974 carries the post-translational modification Phosphothreonine. 3 positions are modified to phosphoserine: Ser978, Ser1009, and Ser1031. The interval Gly1022–Leu1049 is disordered. Positions Gln1028–Thr1037 are enriched in polar residues. The residue at position 1037 (Thr1037) is a Phosphothreonine.

Interacts with RTN4R. Post-translationally, N-glycosylated.

Its subcellular location is the cytoplasmic granule membrane. It is found in the golgi apparatus membrane. The protein localises to the golgi apparatus. The protein resides in the trans-Golgi network membrane. It localises to the cell membrane. In terms of biological role, possible role in axon guidance through interaction with RTN4R. The protein is Dyslexia-associated protein KIAA0319-like protein of Pongo abelii (Sumatran orangutan).